Reading from the N-terminus, the 376-residue chain is Putative glutamate--cysteine ligase 2-1 (376 aa).

It belongs to the glutamate--cysteine ligase type 2 family. YbdK subfamily.

The catalysed reaction is L-cysteine + L-glutamate + ATP = gamma-L-glutamyl-L-cysteine + ADP + phosphate + H(+). Its function is as follows. ATP-dependent carboxylate-amine ligase which exhibits weak glutamate--cysteine ligase activity. The chain is Putative glutamate--cysteine ligase 2-1 from Mycobacterium sp. (strain KMS).